Here is a 427-residue protein sequence, read N- to C-terminus: Enolase (427 aa).

Gln-163 serves as a coordination point for (2R)-2-phosphoglycerate. The active-site Proton donor is the Glu-205. Residues Asp-242, Glu-285, and Asp-312 each contribute to the Mg(2+) site. (2R)-2-phosphoglycerate is bound by residues Lys-337, Arg-366, Ser-367, and Lys-388. Lys-337 functions as the Proton acceptor in the catalytic mechanism.

Belongs to the enolase family. Requires Mg(2+) as cofactor.

The protein localises to the cytoplasm. It is found in the secreted. The protein resides in the cell surface. The enzyme catalyses (2R)-2-phosphoglycerate = phosphoenolpyruvate + H2O. It participates in carbohydrate degradation; glycolysis; pyruvate from D-glyceraldehyde 3-phosphate: step 4/5. In terms of biological role, catalyzes the reversible conversion of 2-phosphoglycerate (2-PG) into phosphoenolpyruvate (PEP). It is essential for the degradation of carbohydrates via glycolysis. This is Enolase from Paraburkholderia phymatum (strain DSM 17167 / CIP 108236 / LMG 21445 / STM815) (Burkholderia phymatum).